The chain runs to 376 residues: Chaperone protein DnaJ (376 aa).

One can recognise a J domain in the interval 5-70 (DYYEVLGVAK…QKRAAYDQYG (66 aa)). The CR-type zinc-finger motif lies at 136 to 214 (GYDTQIRVPS…CHGSGKVKET (79 aa)). The Zn(2+) site is built by Cys-149, Cys-152, Cys-166, Cys-169, Cys-188, Cys-191, Cys-202, and Cys-205. CXXCXGXG motif repeat units follow at residues 149 to 156 (CGVCHGSG), 166 to 173 (CPTCHGQG), 188 to 195 (CPKCHGTG), and 202 to 209 (CAHCHGSG).

The protein belongs to the DnaJ family. In terms of assembly, homodimer. Zn(2+) is required as a cofactor.

Its subcellular location is the cytoplasm. Its function is as follows. Participates actively in the response to hyperosmotic and heat shock by preventing the aggregation of stress-denatured proteins and by disaggregating proteins, also in an autonomous, DnaK-independent fashion. Unfolded proteins bind initially to DnaJ; upon interaction with the DnaJ-bound protein, DnaK hydrolyzes its bound ATP, resulting in the formation of a stable complex. GrpE releases ADP from DnaK; ATP binding to DnaK triggers the release of the substrate protein, thus completing the reaction cycle. Several rounds of ATP-dependent interactions between DnaJ, DnaK and GrpE are required for fully efficient folding. Also involved, together with DnaK and GrpE, in the DNA replication of plasmids through activation of initiation proteins. The polypeptide is Chaperone protein DnaJ (Burkholderia mallei (strain NCTC 10229)).